We begin with the raw amino-acid sequence, 383 residues long: NifS-like protein (383 aa).

Pyridoxal 5'-phosphate-binding positions include 58-59 (SE) and 184-186 (SLN).

The protein belongs to the class-V pyridoxal-phosphate-dependent aminotransferase family. NifS/IscS subfamily. Requires pyridoxal 5'-phosphate as cofactor.

The protein localises to the virion. In African swine fever virus (isolate Pig/Kenya/KEN-50/1950) (ASFV), this protein is NifS-like protein.